Here is a 118-residue protein sequence, read N- to C-terminus: UPF0295 protein GWCH70_0499 (118 aa).

Helical transmembrane passes span 12–32 and 42–62; these read IRTF…IGIF and LFMI…FWIG.

It belongs to the UPF0295 family.

It localises to the cell membrane. This is UPF0295 protein GWCH70_0499 from Geobacillus sp. (strain WCH70).